The primary structure comprises 433 residues: Histidinol dehydrogenase homolog (433 aa).

The Zn(2+) site is built by Gln-249 and His-252. Active-site proton acceptor residues include Glu-319 and His-320. Positions 353 and 412 each coordinate Zn(2+).

This sequence belongs to the histidinol dehydrogenase family. The cofactor is Zn(2+).

This is Histidinol dehydrogenase homolog from Ruegeria pomeroyi (strain ATCC 700808 / DSM 15171 / DSS-3) (Silicibacter pomeroyi).